We begin with the raw amino-acid sequence, 215 residues long: Large ribosomal subunit protein uL3 (215 aa).

The segment at 124–164 (KRHGFSRGPMTHGSKNHREPGSTGAGTTPGRIYPGKRMAGR) is disordered.

The protein belongs to the universal ribosomal protein uL3 family. As to quaternary structure, part of the 50S ribosomal subunit. Forms a cluster with proteins L14 and L19.

Its function is as follows. One of the primary rRNA binding proteins, it binds directly near the 3'-end of the 23S rRNA, where it nucleates assembly of the 50S subunit. The polypeptide is Large ribosomal subunit protein uL3 (Synechococcus sp. (strain RCC307)).